Consider the following 59-residue polypeptide: Large ribosomal subunit protein bL33 (59 aa).

This sequence belongs to the bacterial ribosomal protein bL33 family.

The sequence is that of Large ribosomal subunit protein bL33 from Borrelia turicatae (strain 91E135).